Here is a 226-residue protein sequence, read N- to C-terminus: PKHD-type hydroxylase PSPA7_5129 (226 aa).

A Fe2OG dioxygenase domain is found at 78–178 (KVFPPLFNCY…RYASFFWTQS (101 aa)). Fe cation-binding residues include H96, D98, and H159. R169 is a 2-oxoglutarate binding site.

Fe(2+) is required as a cofactor. It depends on L-ascorbate as a cofactor.

The polypeptide is PKHD-type hydroxylase PSPA7_5129 (Pseudomonas paraeruginosa (strain DSM 24068 / PA7) (Pseudomonas aeruginosa (strain PA7))).